Here is a 373-residue protein sequence, read N- to C-terminus: Dual-specificity RNA methyltransferase RlmN (373 aa).

Catalysis depends on E94, which acts as the Proton acceptor. A Radical SAM core domain is found at 100–339 (EADRATLCVS…VIVRKTRGDD (240 aa)). An intrachain disulfide couples C107 to C344. Residues C114, C118, and C121 each coordinate [4Fe-4S] cluster. Residues 168-169 (GE), S200, 222-224 (SLH), and N301 contribute to the S-adenosyl-L-methionine site. C344 acts as the S-methylcysteine intermediate in catalysis.

It belongs to the radical SAM superfamily. RlmN family. [4Fe-4S] cluster is required as a cofactor.

It localises to the cytoplasm. The enzyme catalyses adenosine(2503) in 23S rRNA + 2 reduced [2Fe-2S]-[ferredoxin] + 2 S-adenosyl-L-methionine = 2-methyladenosine(2503) in 23S rRNA + 5'-deoxyadenosine + L-methionine + 2 oxidized [2Fe-2S]-[ferredoxin] + S-adenosyl-L-homocysteine. It carries out the reaction adenosine(37) in tRNA + 2 reduced [2Fe-2S]-[ferredoxin] + 2 S-adenosyl-L-methionine = 2-methyladenosine(37) in tRNA + 5'-deoxyadenosine + L-methionine + 2 oxidized [2Fe-2S]-[ferredoxin] + S-adenosyl-L-homocysteine. Its function is as follows. Specifically methylates position 2 of adenine 2503 in 23S rRNA and position 2 of adenine 37 in tRNAs. m2A2503 modification seems to play a crucial role in the proofreading step occurring at the peptidyl transferase center and thus would serve to optimize ribosomal fidelity. In Tolumonas auensis (strain DSM 9187 / NBRC 110442 / TA 4), this protein is Dual-specificity RNA methyltransferase RlmN.